A 371-amino-acid polypeptide reads, in one-letter code: ETS-related transcription factor Elf-3 (371 aa).

The 87-residue stretch at 46–132 (NPQMSLEGTE…AQLRDLTSSS (87 aa)) folds into the PNT domain. The short motif at 137 to 145 (SWIIELLEK) is the 9aaTAD element. A disordered region spans residues 173-251 (GQQASPYHPG…HGKRKRGRPR (79 aa)). Low complexity predominate over residues 181–216 (PGSCGAGAPSPGSSDVSTAGTGASRSSHSSDSGGSD). Residues 231-241 (GFRDCKKGDPK) show a composition bias toward basic and acidic residues. Residues 242 to 251 (HGKRKRGRPR) are compositionally biased toward basic residues. A DNA-binding region (ETS) is located at residues 273–355 (THLWEFIRDI…DGRRLVYKFG (83 aa)).

Belongs to the ETS family. Interacts with TBP. Interacts with CREBBP and EP300; these act as transcriptional coactivators of ELF3 and positively modulate its function. Interacts with XRCC5/KU86 and XRCC6/KU70; these inhibit the ability of ELF3 to bind DNA and negatively modulate its transcriptional activity. Associated with CLND7 and POU2F3. Interacts with ZNF768. In terms of tissue distribution, expressed exclusively in tissues containing a high content of terminally differentiated epithelial cells including mammary gland, colon, trachea, kidney, prostate, uterus, stomach and skin.

It is found in the cytoplasm. It localises to the nucleus. In terms of biological role, transcriptional activator that binds and transactivates ETS sequences containing the consensus nucleotide core sequence GGA[AT]. Acts synergistically with POU2F3 to transactivate the SPRR2A promoter and with RUNX1 to transactivate the ANGPT1 promoter. Also transactivates collagenase, CCL20, CLND7, FLG, KRT8, NOS2, PTGS2, SPRR2B, TGFBR2 and TGM3 promoters. Represses KRT4 promoter activity. Involved in mediating vascular inflammation. May play an important role in epithelial cell differentiation and tumorigenesis. May be a critical downstream effector of the ERBB2 signaling pathway. May be associated with mammary gland development and involution. Plays an important role in the regulation of transcription with TATA-less promoters in preimplantation embryos, which is essential in preimplantation development. In Homo sapiens (Human), this protein is ETS-related transcription factor Elf-3.